Here is a 554-residue protein sequence, read N- to C-terminus: Inactive sesquithujene synthase (554 aa).

Residues aspartate 308 and aspartate 312 each coordinate Mg(2+). Substrate is bound by residues aspartate 308, aspartate 312, arginine 449, and asparagine 452. Positions 308–312 match the DDXXD motif motif; it reads DDMFD. The Mg(2+) site is built by asparagine 452, serine 456, and glutamate 460.

This sequence belongs to the terpene synthase family. Monomer. Requires Mg(2+) as cofactor. It depends on Mn(2+) as a cofactor.

It localises to the cytoplasm. Its pathway is secondary metabolite biosynthesis; terpenoid biosynthesis. Non-functional sesquiterpene synthase having less than 1% of the activity found in cv. Delprim. The polypeptide is Inactive sesquithujene synthase (Zea mays (Maize)).